Reading from the N-terminus, the 118-residue chain is NADH dehydrogenase [ubiquinone] iron-sulfur protein 5-A (118 aa).

Residues 46 to 87 (KGRCYDFWMDFSECMSHCREPKDCTLLREDYLECLHHSKEFQ) enclose the CHCH domain. Short sequence motifs (cx9C motif) lie at residues 49–59 (CYDFWMDFSEC) and 69–79 (CTLLREDYLEC). 2 disulfide bridges follow: cysteine 49–cysteine 79 and cysteine 59–cysteine 69. Positions 98 to 118 (RKLRAASRKGEEAGDGTHNHH) are disordered.

This sequence belongs to the complex I NDUFS5 subunit family. As to quaternary structure, complex I is composed of at least 49 different subunits. This is a component of the iron-sulfur (IP) fragment of the enzyme.

The protein localises to the mitochondrion. It is found in the mitochondrion inner membrane. Its subcellular location is the mitochondrion intermembrane space. Functionally, accessory subunit of the mitochondrial membrane respiratory chain NADH dehydrogenase (Complex I), that is believed not to be involved in catalysis. Complex I functions in the transfer of electrons from NADH to the respiratory chain. The immediate electron acceptor for the enzyme is believed to be ubiquinone. The polypeptide is NADH dehydrogenase [ubiquinone] iron-sulfur protein 5-A (Arabidopsis thaliana (Mouse-ear cress)).